The sequence spans 288 residues: Polyamine aminopropyltransferase (288 aa).

Residues 9–238 (ETLHDQFGQY…GIMTFAWATD (230 aa)) form the PABS domain. An S-methyl-5'-thioadenosine-binding site is contributed by Q33. Residues H64 and D88 each contribute to the spermidine site. Residues E108 and 140–141 (DG) contribute to the S-methyl-5'-thioadenosine site. The active-site Proton acceptor is D158. Residue 158-161 (DCTD) participates in spermidine binding. Residue P165 coordinates S-methyl-5'-thioadenosine.

It belongs to the spermidine/spermine synthase family. In terms of assembly, homodimer or homotetramer.

It localises to the cytoplasm. The catalysed reaction is S-adenosyl 3-(methylsulfanyl)propylamine + putrescine = S-methyl-5'-thioadenosine + spermidine + H(+). It functions in the pathway amine and polyamine biosynthesis; spermidine biosynthesis; spermidine from putrescine: step 1/1. Functionally, catalyzes the irreversible transfer of a propylamine group from the amino donor S-adenosylmethioninamine (decarboxy-AdoMet) to putrescine (1,4-diaminobutane) to yield spermidine. The chain is Polyamine aminopropyltransferase from Shigella dysenteriae serotype 1 (strain Sd197).